A 129-amino-acid chain; its full sequence is Glycine cleavage system H protein (129 aa).

Residues 23-104 (SVTVGITHHA…AYTAWLFKIK (82 aa)) form the Lipoyl-binding domain. Lysine 64 carries the N6-lipoyllysine modification.

It belongs to the GcvH family. The glycine cleavage system is composed of four proteins: P, T, L and H. (R)-lipoate is required as a cofactor.

In terms of biological role, the glycine cleavage system catalyzes the degradation of glycine. The H protein shuttles the methylamine group of glycine from the P protein to the T protein. The protein is Glycine cleavage system H protein of Thiobacillus denitrificans (strain ATCC 25259 / T1).